Here is a 242-residue protein sequence, read N- to C-terminus: ATP synthase subunit a (242 aa).

6 helical membrane-spanning segments follow: residues 29-49, 83-103, 114-134, 140-160, 181-201, and 206-226; these read SAVA…IAFV, VFFP…IIGM, IIVT…YGIY, FFSL…MVII, VAGH…TWFF, and IALV…QAYI.

The protein belongs to the ATPase A chain family. As to quaternary structure, F-type ATPases have 2 components, CF(1) - the catalytic core - and CF(0) - the membrane proton channel. CF(1) has five subunits: alpha(3), beta(3), gamma(1), delta(1), epsilon(1). CF(0) has three main subunits: a(1), b(2) and c(9-12). The alpha and beta chains form an alternating ring which encloses part of the gamma chain. CF(1) is attached to CF(0) by a central stalk formed by the gamma and epsilon chains, while a peripheral stalk is formed by the delta and b chains.

The protein resides in the cell inner membrane. In terms of biological role, key component of the proton channel; it plays a direct role in the translocation of protons across the membrane. The polypeptide is ATP synthase subunit a (Orientia tsutsugamushi (strain Boryong) (Rickettsia tsutsugamushi)).